Here is a 365-residue protein sequence, read N- to C-terminus: Chorismate synthase (365 aa).

Arg-46 provides a ligand contact to NADP(+). FMN is bound by residues 123–125, 241–242, Gly-281, 296–300, and Arg-322; these read RSS, NG, and KPTPS.

It belongs to the chorismate synthase family. Homotetramer. Requires FMNH2 as cofactor.

It carries out the reaction 5-O-(1-carboxyvinyl)-3-phosphoshikimate = chorismate + phosphate. It functions in the pathway metabolic intermediate biosynthesis; chorismate biosynthesis; chorismate from D-erythrose 4-phosphate and phosphoenolpyruvate: step 7/7. Catalyzes the anti-1,4-elimination of the C-3 phosphate and the C-6 proR hydrogen from 5-enolpyruvylshikimate-3-phosphate (EPSP) to yield chorismate, which is the branch point compound that serves as the starting substrate for the three terminal pathways of aromatic amino acid biosynthesis. This reaction introduces a second double bond into the aromatic ring system. This is Chorismate synthase from Helicobacter pylori (strain G27).